The chain runs to 335 residues: Olfactory receptor 9K2 (335 aa).

The Extracellular portion of the chain corresponds to 1 to 50 (MLGSKPRVHLYILPCASQQVSTMGDRGTSNHSEMTDFILAGFRVRPELHI). Asn30 is a glycosylation site (N-linked (GlcNAc...) asparagine). Residues 51-71 (LLFLLFLFVYAMILLGNVGMM) form a helical membrane-spanning segment. Residues 72 to 79 (TIIMTDPR) lie on the Cytoplasmic side of the membrane. Residues 80–100 (LNTPMYFFLGNLSFIDLFYSS) traverse the membrane as a helical segment. Residues 101-124 (VIEPKAMINFWSENKSISFAGCVA) lie on the Extracellular side of the membrane. An N-linked (GlcNAc...) asparagine glycan is attached at Asn114. The cysteines at positions 122 and 214 are disulfide-linked. The helical transmembrane segment at 125 to 145 (QLFLFALLIVTEGFLLAAMAY) threads the bilayer. At 146–164 (DRFIAICNPLLYSVQMSTR) the chain is on the cytoplasmic side. A helical transmembrane segment spans residues 165-185 (LCTQLVAGSYFCGCISSVIQT). The Extracellular segment spans residues 186 to 222 (SMTFTLSFCASRAVDHFYCDSRPLQRLSCSDLFIHRM). The chain crosses the membrane as a helical span at residues 223 to 242 (ISFSLSCIIILPTIIVIIVS). At 243–262 (YMYIVSTVLKIHSTEGHKKA) the chain is on the cytoplasmic side. Residues 263–283 (FSTCSSHLGVVSVLYGAVFFM) traverse the membrane as a helical segment. Residues 284–296 (YLTPDRFPELSKV) are Extracellular-facing. Residues 316-335 (RNKDVQEALKKFLEKKNIIL) lie on the Cytoplasmic side of the membrane.

This sequence belongs to the G-protein coupled receptor 1 family.

The protein localises to the cell membrane. Odorant receptor. The polypeptide is Olfactory receptor 9K2 (OR9K2) (Homo sapiens (Human)).